We begin with the raw amino-acid sequence, 178 residues long: uncharacterized protein (178 aa).

This is an uncharacterized protein from Schizosaccharomyces pombe (strain 972 / ATCC 24843) (Fission yeast).